Reading from the N-terminus, the 269-residue chain is MSGFLDAEAASFAIGGATLLDRIDLRIDRGELIAIVGPNGAGKSTLLRLLSGDLRPTRGAVSLQQRAIHSYAPRELASRRAMLSQHVNVSFPFTVEEVVWMGAGDRGRGTSQSLVDAALHEVGLDAFRDRQLPTLSGGEQQRAHFARVLVQLRCGEVEHGPGLLLLDEPTSSLDLRHQIDLAGTARRCARNGTTVIAILHDINLAARFADRIVVLHQGRLAADGAPSQVIENSLIRRVFDIALVVRTAEDGVPFLLPQMIDAARPQSEG.

Residues 5–242 (LDAEAASFAI…SLIRRVFDIA (238 aa)) enclose the ABC transporter domain. An ATP-binding site is contributed by 37 to 44 (GPNGAGKS).

This sequence belongs to the ABC transporter superfamily. Heme (hemin) importer (TC 3.A.1.14.5) family. The complex is composed of two ATP-binding proteins (HmuV), two transmembrane proteins (HmuU) and a solute-binding protein (HmuT).

It localises to the cell inner membrane. Its function is as follows. Part of the ABC transporter complex HmuTUV involved in hemin import. Responsible for energy coupling to the transport system. This chain is Hemin import ATP-binding protein HmuV, found in Rhodopseudomonas palustris (strain BisB18).